The sequence spans 316 residues: Ribose-phosphate pyrophosphokinase (316 aa).

Residues 39–41 (DGE) and 98–99 (RQ) contribute to the ATP site. 2 residues coordinate Mg(2+): H133 and D172. K195 is an active-site residue. D-ribose 5-phosphate-binding positions include R197, D221, and 225–229 (DTANT).

It belongs to the ribose-phosphate pyrophosphokinase family. Class I subfamily. As to quaternary structure, homohexamer. Requires Mg(2+) as cofactor.

It localises to the cytoplasm. It carries out the reaction D-ribose 5-phosphate + ATP = 5-phospho-alpha-D-ribose 1-diphosphate + AMP + H(+). It functions in the pathway metabolic intermediate biosynthesis; 5-phospho-alpha-D-ribose 1-diphosphate biosynthesis; 5-phospho-alpha-D-ribose 1-diphosphate from D-ribose 5-phosphate (route I): step 1/1. Involved in the biosynthesis of the central metabolite phospho-alpha-D-ribosyl-1-pyrophosphate (PRPP) via the transfer of pyrophosphoryl group from ATP to 1-hydroxyl of ribose-5-phosphate (Rib-5-P). The sequence is that of Ribose-phosphate pyrophosphokinase from Nitrosomonas europaea (strain ATCC 19718 / CIP 103999 / KCTC 2705 / NBRC 14298).